The primary structure comprises 434 residues: D-amino acid dehydrogenase (434 aa).

3-17 (VVILGSGVVGVASAW) contributes to the FAD binding site.

The protein belongs to the DadA oxidoreductase family. FAD is required as a cofactor.

The catalysed reaction is a D-alpha-amino acid + A + H2O = a 2-oxocarboxylate + AH2 + NH4(+). It functions in the pathway amino-acid degradation; D-alanine degradation; NH(3) and pyruvate from D-alanine: step 1/1. In terms of biological role, oxidative deamination of D-amino acids. The sequence is that of D-amino acid dehydrogenase from Yersinia enterocolitica serotype O:8 / biotype 1B (strain NCTC 13174 / 8081).